We begin with the raw amino-acid sequence, 494 residues long: MRQNLKKVAQIKVDESKKLFPYVFRVKTSCGNCAKRSKPKLIYLLIFSLISSCFVFAPQLLCFPYPSALFLIDSSIKEIENRVSESNIESPKTSQKEESISCDRTGYRSDICFMKGDIRTHSPSSSIFLYTSNDLTTDQVLQEKIKPYTRKWETSIMETIPELKLVTKDMKLFGDKRKCEVIHEVPAVLFSTGGYTGNLYHEFNDGLIPLYITSKRFNKKVVFVIAEYHKWWEMKYGDVLSQLSDYSLIDFNKDKRTHCFKEAIVGLRIHGELTVDPSQMQDDGTTINEFRNVLDRAYRPRINRLDRLEEQRFHARLAQRRKAKRPKLALFSRTGSRGITNEDLMVKMAQRIGFDIEVLRPDRTTELAKIYRVLNSSKVMVGVHGAAMTHFLFMKPGSIFIQIIPLGTDWAAETYYGEPAKKLGLDYNGYKILPRESSLYEKYDKDDPILKDPNSITKKGWQFTKGIYLNDQKVRLDLHRFKKLLIDAYAKSIR.

The Cytoplasmic portion of the chain corresponds to 1 to 40 (MRQNLKKVAQIKVDESKKLFPYVFRVKTSCGNCAKRSKPK). The chain crosses the membrane as a helical; Signal-anchor for type II membrane protein span at residues 41 to 61 (LIYLLIFSLISSCFVFAPQLL). Topologically, residues 62–494 (CFPYPSALFL…LIDAYAKSIR (433 aa)) are lumenal. The N-linked (GlcNAc...) asparagine glycan is linked to Asn-375.

It belongs to the glycosyltransferase 61 family.

It is found in the golgi apparatus membrane. Its function is as follows. Glycosyletransferase required for the proper composition and structural properties of released seed coat mucilage. Required for the production of highly branched xylan polymers in seed coat mucilage. Facilitates the addition of xylose residues directly to the xylan backbone. Xylan with xylose side chains seems to be necessary for pectin attachment to the seed surface. Essential for xylan synthesis in seed coat epidermal (SCE) cells. The protein is Xylan glycosyltransferase MUCI21 of Arabidopsis thaliana (Mouse-ear cress).